Reading from the N-terminus, the 745-residue chain is Poly(A) polymerase alpha (745 aa).

The span at 1 to 17 shows a compositional bias: low complexity; the sequence is MPFPVTTQGSQQTQPPQ. A disordered region spans residues 1 to 22; it reads MPFPVTTQGSQQTQPPQKHYGI. Phosphoserine is present on residues Ser-10 and Ser-24. ATP is bound by residues 100–102, Thr-109, 113–115, Asp-167, Lys-228, Tyr-237, and 246–247; these read FGS, DID, and GV. Asp-113, Asp-115, and Asp-167 together coordinate Mg(2+). Glycyl lysine isopeptide (Lys-Gly) (interchain with G-Cter in SUMO) cross-links involve residues Lys-444, Lys-445, Lys-506, and Lys-507. Residues 490 to 507 carry the Nuclear localization signal 1 motif; it reads RKQLHQLLPNHVLQKKKK. Residues 508–643 form a ser/Thr-rich region; sequence HSTEGVKLTA…TSGNAATKIP (136 aa). A compositionally biased stretch (low complexity) spans 523–534; that stretch reads LDLSMDSDNSMS. Disordered stretches follow at residues 523-565 and 577-704; these read LDLS…AVTA and SVPQ…SETI. Residues 535 to 557 show a composition bias toward polar residues; sequence VPSPTSATKTSPLNSSGSSQGRN. A phosphoserine mark is found at Ser-537 and Ser-558. Composition is skewed to low complexity over residues 583-594 and 611-640; these read SSESSGGTSSES and TVSRVVSSTRLVNPPPRSSGNAATSGNAAT. 2 positions are modified to N6-acetyllysine: Lys-641 and Lys-650. The Nuclear localization signal 2 signature appears at 650 to 665; the sequence is KRTSSPHKEESPKKTK. Composition is skewed to basic and acidic residues over residues 655-666 and 682-692; these read PHKEESPKKTKT and GHDKTEAKEQL. The segment at 677–745 is required for interaction with NUDT21; it reads CLALSGHDKT…KNSIKLRLNR (69 aa). Positions 694 to 704 are enriched in low complexity; that stretch reads TETSTTQSETI. Lys-736 carries the N6-acetyllysine; alternate modification. A Glycyl lysine isopeptide (Lys-Gly) (interchain with G-Cter in SUMO); alternate cross-link involves residue Lys-736. Residue Ser-738 is modified to Phosphoserine. Residue Lys-740 is modified to N6-acetyllysine; alternate. Lys-740 is covalently cross-linked (Glycyl lysine isopeptide (Lys-Gly) (interchain with G-Cter in SUMO); alternate).

This sequence belongs to the poly(A) polymerase family. In terms of assembly, monomer. Found in a complex with CPSF1, FIP1L1 and PAPOLA. Interacts with AHCYL1 and FIP1L1; the interaction with AHCYL1 seems to increase interaction with FIP1L1. Interacts with NUDT21; the interaction is diminished by acetylation. Interacts with KPNB1; the interaction promotes PAP nuclear import and is inhibited by acetylation of PAP. Mg(2+) is required as a cofactor. The cofactor is Mn(2+). In terms of processing, polysumoylated. Varying sumoylation depending on tissue- and cell-type. Highly sumoylated in bladder and NIH 3T3 cells. Sumoylation is required for nuclear localization and enhances PAP stability. Desumoylated by SENP1. Inhibits polymerase activity. Hyperphosphorylation on multiple CDK2 consensus and non-consensus sites in the C-terminal Ser/Thr-rich region represses PAP activity in late M-phase. Phosphorylation/dephosphorylation may regulate the interaction between PAP and CPSF. Post-translationally, acetylated in the C-terminus. Acetylation decreases interaction with NUDT21 and KPNB1, and inhibits nuclear localization through inhibiting binding to the importin alpha/beta complex.

It is found in the cytoplasm. The protein localises to the nucleus. The enzyme catalyses RNA(n) + ATP = RNA(n)-3'-adenine ribonucleotide + diphosphate. In terms of biological role, polymerase that creates the 3'-poly(A) tail of mRNA's. Also required for the endoribonucleolytic cleavage reaction at some polyadenylation sites. May acquire specificity through interaction with a cleavage and polyadenylation specificity factor (CPSF) at its C-terminus. In Homo sapiens (Human), this protein is Poly(A) polymerase alpha (PAPOLA).